Here is a 1411-residue protein sequence, read N- to C-terminus: Alpha-latroinsectotoxin-Lt1a (1411 aa).

Positions 1–35 (ACSSPEVSIFHFFVYAGSFVKNFKKMKGSSAISKR) are excised as a propeptide. The interval 245–264 (ALYALFYGTETFISIMFYLV) is helix H8 is the probable transmembrane region of the tetrameric pore inserted in the target cell membrane. 20 ANK repeats span residues 462-495 (DIHRDLYNAAQVPYAREALSISRTLIQNGANVSE), 499-528 (LGRGAIHAAASAGNYDVGELLLNKDINLLE), 533-562 (NGYTPLHIAADSNKNDFVMFLIGNNADVNV), 567-597 (DLFTPLHLAARRDLTDVTQTLIDITEIDLNA), 601-630 (SGFTPLHLSISSTSETAAILIRNTNAVINI), 634-663 (VGLTPLHLATLQNNLSVSKLLAGKGAYLND), 667-697 (NGMTPLHYAAMTGNLEMVDFLLNQQYININA), 702-732 (KKWTPLHLAILFKKNDVAERLLSDENLNIRL), 736-765 (GGINPLHLASATGNKQLVIELLAKNADVTR), 769-798 (KGFSALHLGIIGKNEEIPFFLVEKGANVND), 802-831 (SGVTPLHFAAGLGKANIFRLLLSRGADIKA), 835-864 (NSQMPIHEAVSNGHLEIVRILIEKDPSLMN), 869-898 (RNEYPFYLAVEKRYKDIFDYFVSKDANVNE), 902-931 (NGNTLLHLFSSTGELEVVQFLMQNGANFRL), 935-965 (ERKTFFDLAIENGRLNIVAFAVEKNKVNLQA), 968-999 (RGKTILYHAICDSAKYDKIEIVKYFIEKLNES), 1000-1029 (ECNPLHEAAAYAHLDLVKYFVQERGINPAE), 1080-1109 (QENTPITVAIFANKVSILNYLVGIGADPNQ), 1112-1142 (DGDPPLYIAARQGRFEIVRCLIEVHKVDINT), and 1146-1175 (ERFTALHAAARNDFMDVVKYLVRQGADVNA). Positions 1196-1411 (QSSRFLRSGH…KVNSNVSQIK (216 aa)) are excised as a propeptide. A compositionally biased stretch (polar residues) spans 1230–1249 (DKLTQQISSKGTRSDSNSTE). The disordered stretch occupies residues 1230 to 1254 (DKLTQQISSKGTRSDSNSTEGKMHS). An ANK 21 repeat occupies 1331-1361 (NVHSKIYKAIMSGRRSVISEMLCSFAEEYSK).

This sequence belongs to the cationic peptide 01 (latrotoxin) family. 02 (alpha-latroinsectotoxin) subfamily. Homotetramer in membranes. Expressed by the venom gland.

It localises to the secreted. It is found in the target cell membrane. Its function is as follows. Insecticidal presynaptic neurotoxin that induces massive neurotransmitter release at insect (but not vertebrate) neuromuscular junctions. Native toxin forms cation-permeable pores (with high permeability to calcium) in lipid membranes locust muscle membrane and artificial lipid bilayers. May bind to insect neurexin-1 homolog, insect adhesion G protein-coupled receptor L1 homolog, and insect receptor-type tyrosine-protein phosphatase S homolog, and induces neurotransmitter exocytosis both by forming tetrameric pores in membranes and signaling via G protein-coupled receptor. Oligomerization is a process independent of divalent cations. The toxin forms channels with 0.55-0.58 nm entrance diameter and a relatively small conductance in planar phospholipid membranes. The sequence is that of Alpha-latroinsectotoxin-Lt1a from Latrodectus tredecimguttatus (Mediterranean black widow spider).